Consider the following 102-residue polypeptide: MKKVLALVVAAAMGLSSAAFAAETATTPAPTATTTKAAPAKTTHHKKQHKAAPAQKAQAAKKHHKNTKAEQKAPEQKAQAAKKHAGKHSHQQPAKPAAQPAA.

Residues 1 to 21 form the signal peptide; it reads MKKVLALVVAAAMGLSSAAFA. Residues 22–41 show a composition bias toward low complexity; sequence AETATTPAPTATTTKAAPAK. Positions 22–58 are excised as a propeptide; that stretch reads AETATTPAPTATTTKAAPAKTTHHKKQHKAAPAQKAQ. A disordered region spans residues 22-102; the sequence is AETATTPAPT…PAKPAAQPAA (81 aa). Basic residues predominate over residues 80 to 90; sequence AAKKHAGKHSH. Residues 91–102 are compositionally biased toward low complexity; it reads QQPAKPAAQPAA.

The protein belongs to the Asr family. Post-translationally, proteolytic processing gives rise to the active protein.

The protein localises to the periplasm. In terms of biological role, required for growth and/or survival at acidic conditions. The chain is Acid shock protein from Escherichia coli (strain 55989 / EAEC).